An 89-amino-acid polypeptide reads, in one-letter code: Large ribosomal subunit protein bL27 (89 aa).

It belongs to the bacterial ribosomal protein bL27 family.

The protein is Large ribosomal subunit protein bL27 of Afipia carboxidovorans (strain ATCC 49405 / DSM 1227 / KCTC 32145 / OM5) (Oligotropha carboxidovorans).